A 430-amino-acid polypeptide reads, in one-letter code: tRNA(Ile)-lysidine synthase (430 aa).

21–26 (SGGLDS) provides a ligand contact to ATP.

This sequence belongs to the tRNA(Ile)-lysidine synthase family.

Its subcellular location is the cytoplasm. It catalyses the reaction cytidine(34) in tRNA(Ile2) + L-lysine + ATP = lysidine(34) in tRNA(Ile2) + AMP + diphosphate + H(+). Functionally, ligates lysine onto the cytidine present at position 34 of the AUA codon-specific tRNA(Ile) that contains the anticodon CAU, in an ATP-dependent manner. Cytidine is converted to lysidine, thus changing the amino acid specificity of the tRNA from methionine to isoleucine. The chain is tRNA(Ile)-lysidine synthase from Salmonella typhi.